Consider the following 67-residue polypeptide: Guanine nucleotide-binding protein G(I)/G(S)/G(O) subunit gamma-13 (67 aa).

Residue C64 is modified to Cysteine methyl ester. C64 carries S-farnesyl cysteine lipidation. A propeptide spans 65-67 (removed in mature form); that stretch reads TIL.

The protein belongs to the G protein gamma family. In terms of assembly, g proteins are composed of 3 units, alpha, beta and gamma.

The protein resides in the cell membrane. Functionally, guanine nucleotide-binding proteins (G proteins) are involved as a modulator or transducer in various transmembrane signaling systems. The beta and gamma chains are required for the GTPase activity, for replacement of GDP by GTP, and for G protein-effector interaction. This Mus musculus (Mouse) protein is Guanine nucleotide-binding protein G(I)/G(S)/G(O) subunit gamma-13 (Gng13).